Reading from the N-terminus, the 754-residue chain is Elongation factor G-1, mitochondrial (754 aa).

The N-terminal 17 residues, 1 to 17, are a transit peptide targeting the mitochondrion; sequence MARFPTSPAPNRLLRLF. A tr-type G domain is found at 63-340; sequence DKLRNIGISA…GVVSFLPSPN (278 aa). Residues 72 to 79, 139 to 143, and 193 to 196 contribute to the GTP site; these read AHIDSGKT, DTPGH, and NKLD.

The protein belongs to the TRAFAC class translation factor GTPase superfamily. Classic translation factor GTPase family. EF-G/EF-2 subfamily. As to expression, expressed in cotyledons and adult leaves at the same levels.

It is found in the mitochondrion. Its pathway is protein biosynthesis; polypeptide chain elongation. Mitochondrial GTPase that catalyzes the GTP-dependent ribosomal translocation step during translation elongation. During this step, the ribosome changes from the pre-translocational (PRE) to the post-translocational (POST) state as the newly formed A-site-bound peptidyl-tRNA and P-site-bound deacylated tRNA move to the P and E sites, respectively. Catalyzes the coordinated movement of the two tRNA molecules, the mRNA and conformational changes in the ribosome. This chain is Elongation factor G-1, mitochondrial (MEFG1), found in Arabidopsis thaliana (Mouse-ear cress).